A 419-amino-acid polypeptide reads, in one-letter code: Multifunctional CCA protein (419 aa).

2 residues coordinate ATP: glycine 8 and arginine 11. Residues glycine 8 and arginine 11 each coordinate CTP. The Mg(2+) site is built by aspartate 21 and aspartate 23. ATP is bound by residues arginine 91, arginine 149, and arginine 152. CTP is bound by residues arginine 91, arginine 149, and arginine 152. Positions 238–339 (CGVHLMMVID…VRLLERCDAF (102 aa)) constitute an HD domain.

The protein belongs to the tRNA nucleotidyltransferase/poly(A) polymerase family. Bacterial CCA-adding enzyme type 1 subfamily. As to quaternary structure, monomer. Can also form homodimers and oligomers. The cofactor is Mg(2+). Requires Ni(2+) as cofactor.

It carries out the reaction a tRNA precursor + 2 CTP + ATP = a tRNA with a 3' CCA end + 3 diphosphate. The enzyme catalyses a tRNA with a 3' CCA end + 2 CTP + ATP = a tRNA with a 3' CCACCA end + 3 diphosphate. Its function is as follows. Catalyzes the addition and repair of the essential 3'-terminal CCA sequence in tRNAs without using a nucleic acid template. Adds these three nucleotides in the order of C, C, and A to the tRNA nucleotide-73, using CTP and ATP as substrates and producing inorganic pyrophosphate. tRNA 3'-terminal CCA addition is required both for tRNA processing and repair. Also involved in tRNA surveillance by mediating tandem CCA addition to generate a CCACCA at the 3' terminus of unstable tRNAs. While stable tRNAs receive only 3'-terminal CCA, unstable tRNAs are marked with CCACCA and rapidly degraded. The chain is Multifunctional CCA protein from Variovorax paradoxus (strain S110).